We begin with the raw amino-acid sequence, 259 residues long: HTH-type transcriptional regulator Rv1719 (259 aa).

An HTH iclR-type domain is found at 13–75 (IQVIARAAEL…GARGPYRLGP (63 aa)). A DNA-binding region (H-T-H motif) is located at residues 35–54 (QAEIGERVGMARSTVSRILN). Residues 88 to 259 (VVTEMHPFLT…AWFNGTEDRK (172 aa)) enclose the IclR-ED domain.

As to quaternary structure, homodimer.

Functionally, binds to the upstream region of Rv1714 and probably modulates the expression of the downstream gene(s). The polypeptide is HTH-type transcriptional regulator Rv1719 (Mycobacterium tuberculosis (strain ATCC 25618 / H37Rv)).